Consider the following 89-residue polypeptide: Small ribosomal subunit protein uS15 (89 aa).

The protein belongs to the universal ribosomal protein uS15 family. Part of the 30S ribosomal subunit. Forms a bridge to the 50S subunit in the 70S ribosome, contacting the 23S rRNA.

Its function is as follows. One of the primary rRNA binding proteins, it binds directly to 16S rRNA where it helps nucleate assembly of the platform of the 30S subunit by binding and bridging several RNA helices of the 16S rRNA. Functionally, forms an intersubunit bridge (bridge B4) with the 23S rRNA of the 50S subunit in the ribosome. The protein is Small ribosomal subunit protein uS15 of Cupriavidus pinatubonensis (strain JMP 134 / LMG 1197) (Cupriavidus necator (strain JMP 134)).